The chain runs to 295 residues: Structure-specific endonuclease subunit SLX1 (295 aa).

Residues 11–93 (EFYGVYILQS…QHPKTSRHMA (83 aa)) form the GIY-YIG domain. The interval 85 to 133 (HPKTSRHMAGGGGSVTATAETAKSAPVAGKSDATSPAKNRRNAAPVARS) is disordered. Residues 205–272 (CCLCSDAIDY…IPSDVSCSQC (68 aa)) form an SLX1-type zinc finger.

Belongs to the SLX1 family. As to quaternary structure, forms a heterodimer with SLX4. The cofactor is a divalent metal cation.

It is found in the nucleus. Catalytic subunit of the SLX1-SLX4 structure-specific endonuclease that resolves DNA secondary structures generated during DNA repair and recombination. Has endonuclease activity towards branched DNA substrates, introducing single-strand cuts in duplex DNA close to junctions with ss-DNA. This Meyerozyma guilliermondii (strain ATCC 6260 / CBS 566 / DSM 6381 / JCM 1539 / NBRC 10279 / NRRL Y-324) (Yeast) protein is Structure-specific endonuclease subunit SLX1.